A 434-amino-acid chain; its full sequence is D-amino acid dehydrogenase (434 aa).

3–17 (VVILGSGVVGVTSAW) lines the FAD pocket.

This sequence belongs to the DadA oxidoreductase family. FAD is required as a cofactor.

It carries out the reaction a D-alpha-amino acid + A + H2O = a 2-oxocarboxylate + AH2 + NH4(+). It functions in the pathway amino-acid degradation; D-alanine degradation; NH(3) and pyruvate from D-alanine: step 1/1. Functionally, oxidative deamination of D-amino acids. This chain is D-amino acid dehydrogenase, found in Yersinia pseudotuberculosis serotype O:1b (strain IP 31758).